A 200-amino-acid chain; its full sequence is H-2 class I histocompatibility antigen, Q9 alpha chain (200 aa).

An N-terminal signal peptide occupies residues 1 to 21 (MALTMLLLLVAAALTLIETRA). The interval 22–111 (GQHSLQYFHT…AQSYYNQSKG (90 aa)) is alpha-1. At 22 to 200 (GQHSLQYFHT…RYLELGKETL (179 aa)) the chain is on the extracellular side. A glycan (N-linked (GlcNAc...) asparagine) is linked at Asn107. Residues 112-200 (GSHTLQWMYG…RYLELGKETL (89 aa)) form an alpha-2 region. Cys122 and Cys185 are disulfide-bonded.

This sequence belongs to the MHC class I family. In terms of assembly, heterodimer of an alpha chain and a beta chain (beta-2-microglobulin).

It is found in the membrane. Involved in the presentation of foreign antigens to the immune system. The protein is H-2 class I histocompatibility antigen, Q9 alpha chain (H2-Q9) of Mus musculus (Mouse).